Consider the following 141-residue polypeptide: Large ribosomal subunit protein uL16 (141 aa).

The protein belongs to the universal ribosomal protein uL16 family. In terms of assembly, part of the 50S ribosomal subunit.

In terms of biological role, binds 23S rRNA and is also seen to make contacts with the A and possibly P site tRNAs. This is Large ribosomal subunit protein uL16 from Geobacillus kaustophilus (strain HTA426).